The chain runs to 98 residues: Protein Asterix (98 aa).

The next 2 helical transmembrane spans lie at 32 to 52 and 78 to 98; these read LFSI…CLWV and VSLS…NLFV.

The protein belongs to the Asterix family.

It is found in the membrane. The protein is Protein Asterix of Dictyostelium discoideum (Social amoeba).